Consider the following 240-residue polypeptide: Uridylate kinase (240 aa).

Residue 12–15 (KLSG) coordinates ATP. Residues 20–25 (GKQGFG) form an involved in allosteric activation by GTP region. Gly-54 is a UMP binding site. Residues Gly-55 and Arg-59 each coordinate ATP. Residues Asp-74 and 135–142 (TGNPYFST) contribute to the UMP site. Residues Asn-163, Tyr-169, and Asp-172 each coordinate ATP.

The protein belongs to the UMP kinase family. Homohexamer.

It is found in the cytoplasm. It carries out the reaction UMP + ATP = UDP + ADP. Its pathway is pyrimidine metabolism; CTP biosynthesis via de novo pathway; UDP from UMP (UMPK route): step 1/1. With respect to regulation, allosterically activated by GTP. Inhibited by UTP. In terms of biological role, catalyzes the reversible phosphorylation of UMP to UDP. This is Uridylate kinase from Geobacillus kaustophilus (strain HTA426).